The following is a 169-amino-acid chain: Copper-resistant cuproprotein CopI (169 aa).

The signal sequence occupies residues 1-20; sequence MIKKTLLVIALTFTVTTAFA. Cu(2+)-binding residues include H98, C153, H158, and M163.

It belongs to the CopI family.

Its subcellular location is the periplasm. Its function is as follows. Involved in copper tolerance. Mediates copper tolerance in aerobiosis. May also mediate tolerance under anaerobiosis. Not required for virulence or colonization in the mouse model. The protein is Copper-resistant cuproprotein CopI of Vibrio cholerae serotype O1 (strain ATCC 39315 / El Tor Inaba N16961).